The following is a 1030-amino-acid chain: Leucine-rich repeat and coiled-coil domain-containing protein 1 (1030 aa).

LRR repeat units lie at residues 7 to 28, 29 to 50, 51 to 72, 73 to 94, 95 to 116, and 121 to 142; these read RNRELSLMDKQISSLLEICLNS, NLYSINLHCNQISKIEGLRHLC, YLQHLDLSSNLITKIEGLDSLA, SLQSLNLSCNKLTRVEGLEKLF, NLKKLNLSYNSIQDLTGLIPLH, and KLSHLYLHSNCINSIDEVLQST. The LRRCT domain occupies 160–200; that stretch reads NPVCHALGYREIILENLPQLNSLDGLDRSGDPVTAHEVDSM. Residues 298-401 form a disordered region; the sequence is KSEQTKLKAK…GQILGKPHAI (104 aa). The span at 300–311 shows a compositional bias: basic and acidic residues; that stretch reads EQTKLKAKRDTD. Composition is skewed to polar residues over residues 338 to 368 and 378 to 393; these read KTSQTSKQQANQQLKGRTSYSELKQNVSRKQ and ETSLSSGRTDTDSTGQ. Positions 432–645 form a coiled coil; the sequence is RERRWKAEQV…DLEDEFRAAL (214 aa).

This sequence belongs to the LRRCC1 family.

The protein localises to the cytoplasm. Its subcellular location is the cytoskeleton. It localises to the microtubule organizing center. The protein resides in the centrosome. It is found in the centriole. Its function is as follows. Required for the organization of the mitotic spindle. Maintains the structural integrity of centrosomes during mitosis. In Xenopus laevis (African clawed frog), this protein is Leucine-rich repeat and coiled-coil domain-containing protein 1 (lrrcc1).